The primary structure comprises 336 residues: Ketol-acid reductoisomerase (NADP(+)) (336 aa).

A KARI N-terminal Rossmann domain is found at 1–181 (MNVYYDKDCN…GGGRTGIIET (181 aa)). NADP(+)-binding positions include 24–27 (YGSQ), R47, S50, S52, and 82–85 (DEFQ). Residue H107 is part of the active site. G133 provides a ligand contact to NADP(+). In terms of domain architecture, KARI C-terminal knotted spans 182–327 (TFQDETETDL…GKLRSMMPWI (146 aa)). Residues D190, E194, E226, and E230 each contribute to the Mg(2+) site. S251 contacts substrate.

Belongs to the ketol-acid reductoisomerase family. The cofactor is Mg(2+).

It catalyses the reaction (2R)-2,3-dihydroxy-3-methylbutanoate + NADP(+) = (2S)-2-acetolactate + NADPH + H(+). The enzyme catalyses (2R,3R)-2,3-dihydroxy-3-methylpentanoate + NADP(+) = (S)-2-ethyl-2-hydroxy-3-oxobutanoate + NADPH + H(+). It participates in amino-acid biosynthesis; L-isoleucine biosynthesis; L-isoleucine from 2-oxobutanoate: step 2/4. It functions in the pathway amino-acid biosynthesis; L-valine biosynthesis; L-valine from pyruvate: step 2/4. In terms of biological role, involved in the biosynthesis of branched-chain amino acids (BCAA). Catalyzes an alkyl-migration followed by a ketol-acid reduction of (S)-2-acetolactate (S2AL) to yield (R)-2,3-dihydroxy-isovalerate. In the isomerase reaction, S2AL is rearranged via a Mg-dependent methyl migration to produce 3-hydroxy-3-methyl-2-ketobutyrate (HMKB). In the reductase reaction, this 2-ketoacid undergoes a metal-dependent reduction by NADPH to yield (R)-2,3-dihydroxy-isovalerate. In Geotalea daltonii (strain DSM 22248 / JCM 15807 / FRC-32) (Geobacter daltonii), this protein is Ketol-acid reductoisomerase (NADP(+)).